Consider the following 470-residue polypeptide: Desmin (470 aa).

The tract at residues 2–108 (SQAYSSSQRV…QEFLTTRTNE (107 aa)) is head. Phosphoserine; by CDK1 is present on S7. S12 carries the phosphoserine; by AURKB modification. R16 carries the post-translational modification Omega-N-methylarginine. Residue T17 is modified to Phosphothreonine; by AURKB and ROCK1. S28 bears the Phosphoserine; by CDK1 mark. At S31 the chain carries Phosphoserine. S32 is modified (phosphoserine; by CDK1). At R37 the chain carries Asymmetric dimethylarginine; alternate. R37 carries the post-translational modification Omega-N-methylarginine; alternate. S45 bears the Phosphoserine mark. At R58 the chain carries ADP-ribosylarginine. S60 carries the phosphoserine; by AURKB modification. R70 carries the omega-N-methylarginine modification. Position 77 is a phosphothreonine; by ROCK1 (T77). S81 carries the phosphoserine modification. The IF rod domain maps to 108 to 416 (EKVELQELND…KLLEGEESRI (309 aa)). Residues 109 to 141 (KVELQELNDRFANYIEKVRFLEQQNAALAAEVN) form a coil 1A region. A linker 1 region spans residues 142–151 (RLKGREPTRV). Residues 152–252 (AEIYEEELRE…HEEEIRELQA (101 aa)) are coil 1B. Positions 253–268 (QLQEQQVQVEMDMSKP) are linker 12. The tract at residues 268–415 (PDLTAALRDI…RKLLEGEESR (148 aa)) is interaction with NEB. The coil 2A stretch occupies residues 269–287 (DLTAALRDIRAQYETIAAK). The tract at residues 288-295 (NISEAEEW) is linker 2. Residues S290, S358, S361, and S424 each carry the phosphoserine modification. Positions 296–412 (YKSKVSDLTQ…ATYRKLLEGE (117 aa)) are coil 2B. The tract at residues 413–470 (ESRINLPIQTFSALNFRETSPEQRGSEVHTKKTVMIKTIETRDGEVVSEATQQQHEVL) is tail. The interaction with CRYAB stretch occupies residues 438-453 (SEVHTKKTVMIKTIET).

This sequence belongs to the intermediate filament family. As to quaternary structure, homomer. Interacts with DST. Interacts with MTM1. Interacts with EPPK1; interaction is dependent of higher-order structure of intermediate filament. Interacts with CRYAB. Interacts with NEB (via nebulin repeats 160-164). Interacts (via rod region) with NEBL (via nebulin repeats 1-5). Interacts with ASB2; the interaction targets DES for proteasomal degradation. Interacts with PKP1. Interacts with FLII. Post-translationally, ADP-ribosylation prevents ability to form intermediate filaments. In terms of processing, phosphorylation at Ser-7, Ser-28 and Ser-32 by CDK1 and phosphorylation at Ser-60 by AURKB contribute to efficient separation of desmin intermediate filaments during mitosis. Ubiquitination by a SCF-like complex containing ASB2 leads to proteasomal degradation.

Its subcellular location is the cytoplasm. The protein resides in the myofibril. It is found in the sarcomere. The protein localises to the z line. It localises to the cell membrane. Its subcellular location is the sarcolemma. The protein resides in the nucleus. It is found in the cell tip. The protein localises to the nucleus envelope. Functionally, muscle-specific type III intermediate filament essential for proper muscular structure and function. Plays a crucial role in maintaining the structure of sarcomeres, inter-connecting the Z-disks and forming the myofibrils, linking them not only to the sarcolemmal cytoskeleton, but also to the nucleus and mitochondria, thus providing strength for the muscle fiber during activity. In adult striated muscle they form a fibrous network connecting myofibrils to each other and to the plasma membrane from the periphery of the Z-line structures. May act as a sarcomeric microtubule-anchoring protein: specifically associates with detyrosinated tubulin-alpha chains, leading to buckled microtubules and mechanical resistance to contraction. Required for nuclear membrane integrity, via anchoring at the cell tip and nuclear envelope, resulting in maintenance of microtubule-derived intracellular mechanical forces. Contributes to the transcriptional regulation of the NKX2-5 gene in cardiac progenitor cells during a short period of cardiomyogenesis and in cardiac side population stem cells in the adult. Plays a role in maintaining an optimal conformation of nebulette (NEB) on heart muscle sarcomeres to bind and recruit cardiac alpha-actin. In Bos taurus (Bovine), this protein is Desmin (DES).